The sequence spans 1377 residues: DNA-directed RNA polymerase subunit beta' (1377 aa).

Zn(2+)-binding residues include cysteine 60, cysteine 62, cysteine 75, and cysteine 78. Aspartate 449, aspartate 451, and aspartate 453 together coordinate Mg(2+). Zn(2+) is bound by residues cysteine 777, cysteine 851, cysteine 858, and cysteine 861.

The protein belongs to the RNA polymerase beta' chain family. In terms of assembly, the RNAP catalytic core consists of 2 alpha, 1 beta, 1 beta' and 1 omega subunit. When a sigma factor is associated with the core the holoenzyme is formed, which can initiate transcription. Mg(2+) is required as a cofactor. Zn(2+) serves as cofactor.

It carries out the reaction RNA(n) + a ribonucleoside 5'-triphosphate = RNA(n+1) + diphosphate. In terms of biological role, DNA-dependent RNA polymerase catalyzes the transcription of DNA into RNA using the four ribonucleoside triphosphates as substrates. In Borrelia recurrentis (strain A1), this protein is DNA-directed RNA polymerase subunit beta'.